The primary structure comprises 66 residues: MKLTFVLIVAVLVLAVCNFTVADKANNAEAPEQEKRACTPNGSYCNILSGKLNCCSGWCLALICAG.

A signal peptide spans 1-22; it reads MKLTFVLIVAVLVLAVCNFTVA. 3 disulfide bridges follow: Cys38-Cys55, Cys45-Cys59, and Cys54-Cys64.

The protein belongs to the conotoxin O1 superfamily. As to expression, expressed by the venom duct.

The protein resides in the secreted. Probable neurotoxin. This Californiconus californicus (California cone) protein is Conotoxin Cal6.38.